A 529-amino-acid polypeptide reads, in one-letter code: Beta-glucosidase 11 (529 aa).

Residues 1-25 (MAVAGAMVMSGALLLLHLLAFTCVA) form the signal peptide. A beta-D-glucoside-binding positions include Gln-54, His-157, and 202 to 203 (NE). Glu-203 functions as the Proton donor in the catalytic mechanism. Residues Cys-222 and Cys-230 are joined by a disulfide bond. Tyr-346 serves as a coordination point for a beta-D-glucoside. The N-linked (GlcNAc...) asparagine glycan is linked to Asn-361. Residue Glu-417 participates in a beta-D-glucoside binding. Catalysis depends on Glu-417, which acts as the Nucleophile. The N-linked (GlcNAc...) asparagine glycan is linked to Asn-425. A beta-D-glucoside-binding positions include Trp-466, 473–474 (EW), and Phe-482.

It belongs to the glycosyl hydrolase 1 family.

The catalysed reaction is Hydrolysis of terminal, non-reducing beta-D-glucosyl residues with release of beta-D-glucose.. In Oryza sativa subsp. japonica (Rice), this protein is Beta-glucosidase 11 (BGLU11).